We begin with the raw amino-acid sequence, 618 residues long: tRNA 5-methylaminomethyl-2-thiouridine biosynthesis bifunctional protein MnmC (618 aa).

Residues 1–231 form a tRNA (mnm(5)s(2)U34)-methyltransferase region; the sequence is MLQTYAPIDF…KRHMLSAVYE (231 aa). Residues 256 to 618 are FAD-dependent cmnm(5)s(2)U34 oxidoreductase; sequence IGAGIAGATT…KDIIRGHLNN (363 aa).

It in the N-terminal section; belongs to the methyltransferase superfamily. tRNA (mnm(5)s(2)U34)-methyltransferase family. In the C-terminal section; belongs to the DAO family. FAD serves as cofactor.

Its subcellular location is the cytoplasm. The catalysed reaction is 5-aminomethyl-2-thiouridine(34) in tRNA + S-adenosyl-L-methionine = 5-methylaminomethyl-2-thiouridine(34) in tRNA + S-adenosyl-L-homocysteine + H(+). Catalyzes the last two steps in the biosynthesis of 5-methylaminomethyl-2-thiouridine (mnm(5)s(2)U) at the wobble position (U34) in tRNA. Catalyzes the FAD-dependent demodification of cmnm(5)s(2)U34 to nm(5)s(2)U34, followed by the transfer of a methyl group from S-adenosyl-L-methionine to nm(5)s(2)U34, to form mnm(5)s(2)U34. The polypeptide is tRNA 5-methylaminomethyl-2-thiouridine biosynthesis bifunctional protein MnmC (Dichelobacter nodosus (strain VCS1703A)).